The chain runs to 221 residues: Thiamine-phosphate synthase (221 aa).

4-amino-2-methyl-5-(diphosphooxymethyl)pyrimidine is bound by residues 39–43 (QLRCK) and N76. Residues D77 and D96 each contribute to the Mg(2+) site. S114 is a 4-amino-2-methyl-5-(diphosphooxymethyl)pyrimidine binding site. 140–142 (TPT) contacts 2-[(2R,5Z)-2-carboxy-4-methylthiazol-5(2H)-ylidene]ethyl phosphate. K143 is a binding site for 4-amino-2-methyl-5-(diphosphooxymethyl)pyrimidine. Position 171 (G171) interacts with 2-[(2R,5Z)-2-carboxy-4-methylthiazol-5(2H)-ylidene]ethyl phosphate.

It belongs to the thiamine-phosphate synthase family. Requires Mg(2+) as cofactor.

It catalyses the reaction 2-[(2R,5Z)-2-carboxy-4-methylthiazol-5(2H)-ylidene]ethyl phosphate + 4-amino-2-methyl-5-(diphosphooxymethyl)pyrimidine + 2 H(+) = thiamine phosphate + CO2 + diphosphate. The catalysed reaction is 2-(2-carboxy-4-methylthiazol-5-yl)ethyl phosphate + 4-amino-2-methyl-5-(diphosphooxymethyl)pyrimidine + 2 H(+) = thiamine phosphate + CO2 + diphosphate. The enzyme catalyses 4-methyl-5-(2-phosphooxyethyl)-thiazole + 4-amino-2-methyl-5-(diphosphooxymethyl)pyrimidine + H(+) = thiamine phosphate + diphosphate. It functions in the pathway cofactor biosynthesis; thiamine diphosphate biosynthesis; thiamine phosphate from 4-amino-2-methyl-5-diphosphomethylpyrimidine and 4-methyl-5-(2-phosphoethyl)-thiazole: step 1/1. Functionally, condenses 4-methyl-5-(beta-hydroxyethyl)thiazole monophosphate (THZ-P) and 2-methyl-4-amino-5-hydroxymethyl pyrimidine pyrophosphate (HMP-PP) to form thiamine monophosphate (TMP). The polypeptide is Thiamine-phosphate synthase (Deinococcus geothermalis (strain DSM 11300 / CIP 105573 / AG-3a)).